Here is a 348-residue protein sequence, read N- to C-terminus: Putative serine/threonine-protein phosphatase C26H8.05c (348 aa).

The Mn(2+) site is built by Asp-53, His-55, Asp-81, and Asn-113. Catalysis depends on His-114, which acts as the Proton donor. His-163 and His-237 together coordinate Mn(2+). The disordered stretch occupies residues 259–282 (TNEEDSELDSDSASPVDDSPAPGD). Residues 269 to 280 (DSASPVDDSPAP) show a composition bias toward low complexity. Ser-272 carries the post-translational modification Phosphoserine. Leu-348 is modified (leucine methyl ester).

This sequence belongs to the PPP phosphatase family. PP-1 subfamily. It depends on Mn(2+) as a cofactor.

It localises to the cytoplasm. The protein resides in the nucleus. The enzyme catalyses O-phospho-L-seryl-[protein] + H2O = L-seryl-[protein] + phosphate. It catalyses the reaction O-phospho-L-threonyl-[protein] + H2O = L-threonyl-[protein] + phosphate. This chain is Putative serine/threonine-protein phosphatase C26H8.05c, found in Schizosaccharomyces pombe (strain 972 / ATCC 24843) (Fission yeast).